The following is a 281-amino-acid chain: Acetyl-coenzyme A carboxylase carboxyl transferase subunit beta 2 (281 aa).

One can recognise a CoA carboxyltransferase N-terminal domain in the interval 26–281; that stretch reads LLTRCPVCHE…TITQGGHQDV (256 aa). Cys30, Cys33, Cys48, and Cys51 together coordinate Zn(2+). Residues 30 to 51 form a C4-type zinc finger; the sequence is CPVCHEDCYTQDLGEFKVCPHC.

Belongs to the AccD/PCCB family. Acetyl-CoA carboxylase is a heterohexamer composed of biotin carboxyl carrier protein (AccB), biotin carboxylase (AccC) and two subunits each of ACCase subunit alpha (AccA) and ACCase subunit beta (AccD). It depends on Zn(2+) as a cofactor.

It localises to the cytoplasm. It carries out the reaction N(6)-carboxybiotinyl-L-lysyl-[protein] + acetyl-CoA = N(6)-biotinyl-L-lysyl-[protein] + malonyl-CoA. Its pathway is lipid metabolism; malonyl-CoA biosynthesis; malonyl-CoA from acetyl-CoA: step 1/1. In terms of biological role, component of the acetyl coenzyme A carboxylase (ACC) complex. Biotin carboxylase (BC) catalyzes the carboxylation of biotin on its carrier protein (BCCP) and then the CO(2) group is transferred by the transcarboxylase to acetyl-CoA to form malonyl-CoA. This Lactiplantibacillus plantarum (strain JDM1) (Lactobacillus plantarum) protein is Acetyl-coenzyme A carboxylase carboxyl transferase subunit beta 2.